A 248-amino-acid polypeptide reads, in one-letter code: 1-(5-phosphoribosyl)-5-[(5-phosphoribosylamino)methylideneamino] imidazole-4-carboxamide isomerase (248 aa).

D8 serves as the catalytic Proton acceptor. D131 serves as the catalytic Proton donor.

The protein belongs to the HisA/HisF family.

The protein localises to the cytoplasm. It carries out the reaction 1-(5-phospho-beta-D-ribosyl)-5-[(5-phospho-beta-D-ribosylamino)methylideneamino]imidazole-4-carboxamide = 5-[(5-phospho-1-deoxy-D-ribulos-1-ylimino)methylamino]-1-(5-phospho-beta-D-ribosyl)imidazole-4-carboxamide. The protein operates within amino-acid biosynthesis; L-histidine biosynthesis; L-histidine from 5-phospho-alpha-D-ribose 1-diphosphate: step 4/9. In Nitrosomonas eutropha (strain DSM 101675 / C91 / Nm57), this protein is 1-(5-phosphoribosyl)-5-[(5-phosphoribosylamino)methylideneamino] imidazole-4-carboxamide isomerase.